A 515-amino-acid chain; its full sequence is uncharacterized protein (515 aa).

Belongs to the AllF family.

This is an uncharacterized protein from Escherichia coli (strain K12).